The following is a 1038-amino-acid chain: Dorsal-ventral patterning protein Sog (1038 aa).

Residues 1-53 (MANKLRKSNAIEWATATGTVPLLERSCCHSEDAALEPQASKTSHREQAPILRH) are Cytoplasmic-facing. Residues 54-74 (LSQLSHLLIIAGLLIVCLAGV) traverse the membrane as a helical; Signal-anchor for type II membrane protein segment. At 75–1038 (TEGRRHAPLM…QPHHQQRSSS (964 aa)) the chain is on the extracellular side. In terms of domain architecture, VWFC 1 spans 100–175 (TECQFGKVLR…LPGKCCKTCP (76 aa)). N-linked (GlcNAc...) asparagine glycans are attached at residues Asn179 and Asn287. CHRD domains follow at residues 197-337 (NMKH…KYTA), 339-471 (QTEL…TRAS), 474-588 (IFQT…PRPV), and 592-713 (RDSA…STKV). Asn520, Asn666, Asn752, and Asn821 each carry an N-linked (GlcNAc...) asparagine glycan. Positions 742–804 (TKCFHSGRFY…RDGECCPSCV (63 aa)) constitute a VWFC 2 domain. 2 consecutive VWFC domains span residues 830–899 (RGCR…KICP) and 939–1020 (GGCK…TQCR).

It belongs to the chordin family. As to quaternary structure, component of a complex composed of dpp, sog and tsg. Interacts with palmitoyltransferase Hip14. In terms of processing, palmitoylated, probably by Hip14. Post-translationally, cleaved by metalloproteases tok and tld. Cleavage by tok during pupal development contributes to specification of the posterior crossvein in the wing. Abuts the dorsal dpp-expressing cells in a lateral stripe 14-16 cells wide. Later in embryogenesis it is expressed in neuroectoderm and in the endoderm spaced along the anterior-posterior axis of the developing gut.

The protein resides in the golgi apparatus membrane. The protein localises to the cell membrane. Its subcellular location is the secreted. Its function is as follows. Putative negative growth factor. Antagonist of dpp, a protein involved in patterning the dorsal region and in the development of the neuroectoderm; dpp inhibition is enhanced by tsg. Required for establishment of a narrow stripe of peak levels of BMP signaling in the dorsal midline of early embryos, that will give rise to the amnioserosa. During pupal development, plays a role in specification of the posterior crossvein in the wing. Exhibits both agonist and antagonist activities towards BMP signaling during pupal wing patterning. This chain is Dorsal-ventral patterning protein Sog (sog), found in Drosophila melanogaster (Fruit fly).